The chain runs to 342 residues: Serine/threonine-protein kinase-transforming protein mos (342 aa).

Residues 63–338 (VCLMHRLGSG…LLQRDLKAFR (276 aa)) enclose the Protein kinase domain. ATP contacts are provided by residues 69–77 (LGSGGFGSV) and Lys-90. Asp-198 (proton acceptor) is an active-site residue.

Belongs to the protein kinase superfamily. Ser/Thr protein kinase family.

The enzyme catalyses L-seryl-[protein] + ATP = O-phospho-L-seryl-[protein] + ADP + H(+). It carries out the reaction L-threonyl-[protein] + ATP = O-phospho-L-threonyl-[protein] + ADP + H(+). This chain is Serine/threonine-protein kinase-transforming protein mos (V-MOS), found in Myeloproliferative sarcoma virus (isolate ts159).